The following is a 71-amino-acid chain: Small ribosomal subunit protein bS21 (71 aa).

Belongs to the bacterial ribosomal protein bS21 family.

The polypeptide is Small ribosomal subunit protein bS21 (Shewanella piezotolerans (strain WP3 / JCM 13877)).